The following is an 88-amino-acid chain: Acylphosphatase (88 aa).

One can recognise an Acylphosphatase-like domain in the interval 3 to 88; the sequence is AVDVLISGRV…RAGHQGFEVR (86 aa). Active-site residues include R18 and N36.

Belongs to the acylphosphatase family.

It carries out the reaction an acyl phosphate + H2O = a carboxylate + phosphate + H(+). In Methanocella arvoryzae (strain DSM 22066 / NBRC 105507 / MRE50), this protein is Acylphosphatase (acyP).